Here is a 287-residue protein sequence, read N- to C-terminus: Ribosomal RNA small subunit methyltransferase A (287 aa).

S-adenosyl-L-methionine-binding residues include asparagine 28, leucine 30, glycine 55, glutamate 77, aspartate 103, and asparagine 123.

This sequence belongs to the class I-like SAM-binding methyltransferase superfamily. rRNA adenine N(6)-methyltransferase family. RsmA subfamily.

Its subcellular location is the cytoplasm. The catalysed reaction is adenosine(1518)/adenosine(1519) in 16S rRNA + 4 S-adenosyl-L-methionine = N(6)-dimethyladenosine(1518)/N(6)-dimethyladenosine(1519) in 16S rRNA + 4 S-adenosyl-L-homocysteine + 4 H(+). In terms of biological role, specifically dimethylates two adjacent adenosines (A1518 and A1519) in the loop of a conserved hairpin near the 3'-end of 16S rRNA in the 30S particle. May play a critical role in biogenesis of 30S subunits. This Rhodopseudomonas palustris (strain BisB5) protein is Ribosomal RNA small subunit methyltransferase A.